A 345-amino-acid polypeptide reads, in one-letter code: N-acetyl-gamma-glutamyl-phosphate reductase (345 aa).

Cys149 is an active-site residue.

This sequence belongs to the NAGSA dehydrogenase family. Type 1 subfamily.

The protein localises to the cytoplasm. It catalyses the reaction N-acetyl-L-glutamate 5-semialdehyde + phosphate + NADP(+) = N-acetyl-L-glutamyl 5-phosphate + NADPH + H(+). The protein operates within amino-acid biosynthesis; L-arginine biosynthesis; N(2)-acetyl-L-ornithine from L-glutamate: step 3/4. Catalyzes the NADPH-dependent reduction of N-acetyl-5-glutamyl phosphate to yield N-acetyl-L-glutamate 5-semialdehyde. This Bacillus mycoides (strain KBAB4) (Bacillus weihenstephanensis) protein is N-acetyl-gamma-glutamyl-phosphate reductase.